Consider the following 326-residue polypeptide: Transposase InsH for insertion sequence element IS5A (326 aa).

It belongs to the transposase 11 family.

Functionally, involved in the transposition of the insertion sequence IS5. The protein is Transposase InsH for insertion sequence element IS5A (insH1) of Escherichia coli (strain K12).